Consider the following 415-residue polypeptide: Adenylosuccinate synthetase (415 aa).

Residues 11-17 and 39-41 contribute to the GTP site; these read GDEGKGK and GHT. Asp12 serves as the catalytic Proton acceptor. Mg(2+) is bound by residues Asp12 and Gly39. IMP contacts are provided by residues 12–15, 37–40, Thr124, Arg138, Gln218, Thr233, and Arg297; these read DEGK and NAGH. Catalysis depends on His40, which acts as the Proton donor. A substrate-binding site is contributed by 293-299; sequence TTTGRAR. GTP-binding positions include Arg299, 325 to 327, and 403 to 405; these read KLD and STS.

It belongs to the adenylosuccinate synthetase family. Homodimer. The cofactor is Mg(2+).

The protein resides in the cytoplasm. The catalysed reaction is IMP + L-aspartate + GTP = N(6)-(1,2-dicarboxyethyl)-AMP + GDP + phosphate + 2 H(+). It participates in purine metabolism; AMP biosynthesis via de novo pathway; AMP from IMP: step 1/2. Functionally, plays an important role in the de novo pathway of purine nucleotide biosynthesis. Catalyzes the first committed step in the biosynthesis of AMP from IMP. In Helicobacter hepaticus (strain ATCC 51449 / 3B1), this protein is Adenylosuccinate synthetase.